Here is a 416-residue protein sequence, read N- to C-terminus: MAYLFTSESVSEGHPDKVADQISDALIDNFLAFDAQSKVACETLVTTGQVILAGEVKSNTYLDVQNIAREVIRKIGYTKSEYMFEANSCGILSAIHEQSADINQGVDRASKEEQGAGDQGMMFGYATNETENYMPLALDLSHALLIELANLRRENNDIKYLRPDAKSQVTLEYSDDNKPQRIDAIVISTQHDDFDEEATMLAKIKTDLVSILIPRIKAKYPQYAHLFNDQITYHINPTGKFVIGGPHGDTGLTGRKIIVDTYGGKGAHGGGAFSGKDPSKVDRSAAYATRHIAKNLVAAGICDEILVQVSYAIGVAKPTSINVVTYGTSKVNLTDGEISKKVEAIFDMRPYFIEQRLKLRNPIYSETAAYGHMGRTPETVTKTFSAPGGLTKTVEVELFTWEKLDFVDTVKTAFGI.

An ATP-binding site is contributed by H14. A Mg(2+)-binding site is contributed by D16. E42 lines the K(+) pocket. 2 residues coordinate L-methionine: E55 and Q98. Residues Q98–R108 are flexible loop. Residues D164 to K166, K240 to F241, D249, R255 to K256, A272, and K276 contribute to the ATP site. D249 lines the L-methionine pocket. K280 lines the L-methionine pocket.

The protein belongs to the AdoMet synthase family. In terms of assembly, homotetramer; dimer of dimers. The cofactor is Mg(2+). K(+) serves as cofactor.

It is found in the cytoplasm. The enzyme catalyses L-methionine + ATP + H2O = S-adenosyl-L-methionine + phosphate + diphosphate. It participates in amino-acid biosynthesis; S-adenosyl-L-methionine biosynthesis; S-adenosyl-L-methionine from L-methionine: step 1/1. Catalyzes the formation of S-adenosylmethionine (AdoMet) from methionine and ATP. The overall synthetic reaction is composed of two sequential steps, AdoMet formation and the subsequent tripolyphosphate hydrolysis which occurs prior to release of AdoMet from the enzyme. The polypeptide is S-adenosylmethionine synthase (Flavobacterium psychrophilum (strain ATCC 49511 / DSM 21280 / CIP 103535 / JIP02/86)).